Here is a 147-residue protein sequence, read N- to C-terminus: Hemoglobin subunit epsilon-M (147 aa).

A Globin domain is found at 3-147 (HFTPEDKTNI…VSSALGHKYH (145 aa)). Ser14 and Ser51 each carry phosphoserine. The heme b site is built by His64 and His93.

This sequence belongs to the globin family. As to expression, red blood cells.

Hemoglobin epsilon chain is a beta-type chain found in early embryos. The chain is Hemoglobin subunit epsilon-M (HBE1) from Didelphis virginiana (North American opossum).